The sequence spans 428 residues: Enolase (428 aa).

Gln-162 contributes to the (2R)-2-phosphoglycerate binding site. Catalysis depends on Glu-204, which acts as the Proton donor. Mg(2+) contacts are provided by Asp-241, Glu-288, and Asp-315. Residues Lys-340, Arg-369, Ser-370, and Lys-391 each coordinate (2R)-2-phosphoglycerate. Lys-340 functions as the Proton acceptor in the catalytic mechanism.

It belongs to the enolase family. It depends on Mg(2+) as a cofactor.

It localises to the cytoplasm. It is found in the secreted. Its subcellular location is the cell surface. It catalyses the reaction (2R)-2-phosphoglycerate = phosphoenolpyruvate + H2O. It functions in the pathway carbohydrate degradation; glycolysis; pyruvate from D-glyceraldehyde 3-phosphate: step 4/5. Functionally, catalyzes the reversible conversion of 2-phosphoglycerate (2-PG) into phosphoenolpyruvate (PEP). It is essential for the degradation of carbohydrates via glycolysis. This is Enolase from Azobacteroides pseudotrichonymphae genomovar. CFP2.